We begin with the raw amino-acid sequence, 227 residues long: RNA-free ribonuclease P (227 aa).

Belongs to the HARP family.

The catalysed reaction is Endonucleolytic cleavage of RNA, removing 5'-extranucleotides from tRNA precursor.. Its function is as follows. RNA-free RNase P that catalyzes the removal of the 5'-leader sequence from pre-tRNA to produce the mature 5'-terminus. This chain is RNA-free ribonuclease P, found in Archaeoglobus fulgidus (strain ATCC 49558 / DSM 4304 / JCM 9628 / NBRC 100126 / VC-16).